The chain runs to 129 residues: Omega-scoloptoxin(05)-Ssm1a (129 aa).

Residues 1–24 (MPSLCIIALFGTLTFYTLIPSIHT) form the signal peptide. A propeptide spanning residues 25–46 (LKCVRCDGPMSNYDCKTTYPAA) is cleaved from the precursor.

This sequence belongs to the scoloptoxin-05 family. Contains 3 disulfide bonds. Expressed by the venom gland.

It is found in the secreted. In terms of biological role, toxin that increase voltage-gated calcium channel (Cav) currents in DRG neurons by 70% and 120%, when 1 uM and 10 uM are tested, respectively. The polypeptide is Omega-scoloptoxin(05)-Ssm1a (Scolopendra mutilans (Chinese red-headed centipede)).